The sequence spans 506 residues: 2-isopropylmalate synthase (506 aa).

Residues 4 to 266 (ILFMDTTLRD…EPSMTLKEIK (263 aa)) enclose the Pyruvate carboxyltransferase domain. 4 residues coordinate Mn(2+): Asp-13, His-201, His-203, and Asn-237. The interval 390–506 (NITQLQVHFV…KLKSFIQLVK (117 aa)) is regulatory domain.

This sequence belongs to the alpha-IPM synthase/homocitrate synthase family. LeuA type 1 subfamily. Homodimer. The cofactor is Mn(2+).

It localises to the cytoplasm. The enzyme catalyses 3-methyl-2-oxobutanoate + acetyl-CoA + H2O = (2S)-2-isopropylmalate + CoA + H(+). The protein operates within amino-acid biosynthesis; L-leucine biosynthesis; L-leucine from 3-methyl-2-oxobutanoate: step 1/4. Its function is as follows. Catalyzes the condensation of the acetyl group of acetyl-CoA with 3-methyl-2-oxobutanoate (2-ketoisovalerate) to form 3-carboxy-3-hydroxy-4-methylpentanoate (2-isopropylmalate). This is 2-isopropylmalate synthase from Bacillus thuringiensis (strain Al Hakam).